The primary structure comprises 194 residues: Inosine triphosphate pyrophosphatase (194 aa).

Residue 10–15 (TTNLKK) participates in ITP binding. Residue glutamate 36 coordinates Mg(2+). Residues lysine 48, 66 to 67 (DT), lysine 83, lysine 166, and 171 to 172 (HR) each bind ITP.

The protein belongs to the HAM1 NTPase family. In terms of assembly, homodimer. It depends on Mg(2+) as a cofactor. Requires Mn(2+) as cofactor.

It localises to the cytoplasm. It is found in the nucleus. The catalysed reaction is ITP + H2O = IMP + diphosphate + H(+). It catalyses the reaction dITP + H2O = dIMP + diphosphate + H(+). The enzyme catalyses XTP + H2O = XMP + diphosphate + H(+). Pyrophosphatase that hydrolyzes non-canonical purine nucleotides such as inosine triphosphate (ITP), deoxyinosine triphosphate (dITP) or xanthosine 5'-triphosphate (XTP) to their respective monophosphate derivatives. The enzyme does not distinguish between the deoxy- and ribose forms. Probably excludes non-canonical purines from RNA and DNA precursor pools, thus preventing their incorporation into RNA and DNA and avoiding chromosomal lesions. The chain is Inosine triphosphate pyrophosphatase from Encephalitozoon intestinalis (strain ATCC 50506) (Microsporidian parasite).